We begin with the raw amino-acid sequence, 93 residues long: Small ribosomal subunit protein uS19c (93 aa).

The protein belongs to the universal ribosomal protein uS19 family.

The protein resides in the plastid. It is found in the chloroplast. Its function is as follows. Protein S19 forms a complex with S13 that binds strongly to the 16S ribosomal RNA. The sequence is that of Small ribosomal subunit protein uS19c from Oryza nivara (Indian wild rice).